Reading from the N-terminus, the 283-residue chain is Type III pantothenate kinase (283 aa).

Position 9–16 (9–16 (DIGNTRLK)) interacts with ATP. Substrate is bound by residues tyrosine 116 and 123–126 (GVDR). Aspartate 125 functions as the Proton acceptor in the catalytic mechanism. Threonine 149 contributes to the ATP binding site. Threonine 211 serves as a coordination point for substrate.

This sequence belongs to the type III pantothenate kinase family. Homodimer. Requires NH4(+) as cofactor. The cofactor is K(+).

It is found in the cytoplasm. It catalyses the reaction (R)-pantothenate + ATP = (R)-4'-phosphopantothenate + ADP + H(+). The protein operates within cofactor biosynthesis; coenzyme A biosynthesis; CoA from (R)-pantothenate: step 1/5. Functionally, catalyzes the phosphorylation of pantothenate (Pan), the first step in CoA biosynthesis. This chain is Type III pantothenate kinase, found in Cupriavidus taiwanensis (strain DSM 17343 / BCRC 17206 / CCUG 44338 / CIP 107171 / LMG 19424 / R1) (Ralstonia taiwanensis (strain LMG 19424)).